Consider the following 201-residue polypeptide: UPF0301 protein RHE_CH00966 (201 aa).

This sequence belongs to the UPF0301 (AlgH) family.

This Rhizobium etli (strain ATCC 51251 / DSM 11541 / JCM 21823 / NBRC 15573 / CFN 42) protein is UPF0301 protein RHE_CH00966.